Reading from the N-terminus, the 453-residue chain is Crh-like protein CRH11 (453 aa).

The first 21 residues, 1-21 (MKFTTLATIASTLLFAANANA), serve as a signal peptide directing secretion. Cys-24 and Cys-32 are joined by a disulfide. One can recognise a GH16 domain in the interval 28-227 (KSSDCSPVPA…WAGGITDYSQ (200 aa)). Glu-119 (nucleophile) is an active-site residue. The Proton donor role is filled by Glu-123. Residues Glu-123, Trp-204, and Thr-215 each coordinate chitin. 3 disordered regions span residues 281–343 (LESG…SEKS), 362–397 (KTTV…PASA), and 410–430 (GDAA…TENN). Composition is skewed to low complexity over residues 286–343 (SVDS…SEKS), 363–397 (TTVT…PASA), and 412–425 (AAPS…PSVS). N-linked (GlcNAc...) asparagine glycosylation occurs at Asn-290. Residue Asn-430 is the site of GPI-anchor amidated asparagine attachment. The propeptide at 431–453 (GAVSVAKTTSLFGFVALIGFLFV) is removed in mature form.

Belongs to the glycosyl hydrolase 16 family. CRH1 subfamily. The GPI-anchor is attached to the protein in the endoplasmic reticulum and serves to target the protein to the cell surface. There, the glucosamine-inositol phospholipid moiety is cleaved off and the GPI-modified mannoprotein is covalently attached via its lipidless GPI glycan remnant to the 1,6-beta-glucan of the outer cell wall layer.

Its subcellular location is the secreted. It localises to the cell wall. The protein localises to the membrane. The catalysed reaction is Random endo-hydrolysis of N-acetyl-beta-D-glucosaminide (1-&gt;4)-beta-linkages in chitin and chitodextrins.. Its function is as follows. Dual chitinase/transglycosylase that plays a role in cell wall architecture. Chitinase and transglycosylase activities are coupled. Required for the polysaccharide cross-linking at the septa and the cell wall. More specifically, transfers chitin to 1,6-beta-glucan in the cell wall. Plays an important role in fungal pathogenesis via its functions in cell wall assembly and regeneration, filamentation, and adherence to host cells. The protein is Crh-like protein CRH11 (CRH11) of Candida albicans (strain SC5314 / ATCC MYA-2876) (Yeast).